Consider the following 315-residue polypeptide: Adenine deaminase (315 aa).

Positions 14, 16, and 194 each coordinate Zn(2+). The active-site Proton donor is the Glu197. Asp275 contributes to the Zn(2+) binding site. Asp276 lines the substrate pocket.

This sequence belongs to the metallo-dependent hydrolases superfamily. Adenosine and AMP deaminases family. Adenine deaminase type 2 subfamily. Zn(2+) serves as cofactor.

The enzyme catalyses adenine + H2O + H(+) = hypoxanthine + NH4(+). Its function is as follows. Catalyzes the hydrolytic deamination of adenine to hypoxanthine. Plays an important role in the purine salvage pathway and in nitrogen catabolism. This Pseudomonas putida (strain W619) protein is Adenine deaminase.